Reading from the N-terminus, the 129-residue chain is Small ribosomal subunit protein uS13 (129 aa).

The disordered stretch occupies residues 96–129; it reads GLPVRGQRTSTNARTRKGPRKTVGVSKAAAAAKA.

It belongs to the universal ribosomal protein uS13 family. As to quaternary structure, part of the 30S ribosomal subunit. Forms a loose heterodimer with protein S19. Forms two bridges to the 50S subunit in the 70S ribosome.

In terms of biological role, located at the top of the head of the 30S subunit, it contacts several helices of the 16S rRNA. In the 70S ribosome it contacts the 23S rRNA (bridge B1a) and protein L5 of the 50S subunit (bridge B1b), connecting the 2 subunits; these bridges are implicated in subunit movement. Contacts the tRNAs in the A and P-sites. This Opitutus terrae (strain DSM 11246 / JCM 15787 / PB90-1) protein is Small ribosomal subunit protein uS13.